Consider the following 192-residue polypeptide: Elongation factor P (192 aa).

K37 carries the N6-(3,6-diaminohexanoyl)-5-hydroxylysine modification.

Belongs to the elongation factor P family. May be beta-lysylated on the epsilon-amino group of Lys-37 by the combined action of EpmA and EpmB, and then hydroxylated on the C5 position of the same residue by EpmC (if this protein is present). Lysylation is critical for the stimulatory effect of EF-P on peptide-bond formation. The lysylation moiety may extend toward the peptidyltransferase center and stabilize the terminal 3-CCA end of the tRNA. Hydroxylation of the C5 position on Lys-37 may allow additional potential stabilizing hydrogen-bond interactions with the P-tRNA.

It localises to the cytoplasm. It functions in the pathway protein biosynthesis; polypeptide chain elongation. Functionally, involved in peptide bond synthesis. Alleviates ribosome stalling that occurs when 3 or more consecutive Pro residues or the sequence PPG is present in a protein, possibly by augmenting the peptidyl transferase activity of the ribosome. Modification of Lys-37 is required for alleviation. In Acinetobacter baylyi (strain ATCC 33305 / BD413 / ADP1), this protein is Elongation factor P.